We begin with the raw amino-acid sequence, 73 residues long: TKCYVTPDVKSETCPAGQDLCYTETWCVAWCTVRGKRVSLTCAAICPIVPPKVSIKCCSTDACGPFPTWPNVR.

5 disulfide bridges follow: cysteine 3/cysteine 21, cysteine 14/cysteine 42, cysteine 27/cysteine 31, cysteine 46/cysteine 57, and cysteine 58/cysteine 63.

The protein belongs to the three-finger toxin family. Long-chain subfamily. Type II alpha-neurotoxin sub-subfamily. As to expression, expressed by the venom gland.

It is found in the secreted. In terms of biological role, binds with high affinity to muscular (alpha-1/CHRNA1) and neuronal (alpha-7/CHRNA7) nicotinic acetylcholine receptor (nAChR) and inhibits acetylcholine from binding to the receptor, thereby impairing neuromuscular and neuronal transmission. The polypeptide is Long neurotoxin 3 (Ophiophagus hannah (King cobra)).